The sequence spans 153 residues: Pheromone-binding protein Gp-9 (153 aa).

Positions 1 to 19 (MKTFVLHIFIFALVAFASA) are cleaved as a signal peptide. Intrachain disulfides connect cysteine 37–cysteine 77, cysteine 73–cysteine 129, and cysteine 118–cysteine 138.

This sequence belongs to the PBP/GOBP family. Homodimer.

Its subcellular location is the secreted. Colony queen number, a major feature of social organization, is associated with worker genotype for Gp-9. Colonies are headed by either a single reproductive queen (monogyne form) or multiple queens (polygyne form). Differences in worker Gp-9 genotypes between social forms may cause differences in workers' abilities to recognize queens and regulate their numbers. In Solenopsis richteri (Black imported fire ant), this protein is Pheromone-binding protein Gp-9.